The following is a 216-amino-acid chain: Probable GTP-binding protein EngB (216 aa).

The region spanning 24–205 is the EngB-type G domain; sequence ATPEIAFVGR…WARLAALAAE (182 aa). GTP-binding positions include 32–39, 59–63, 86–89, 153–156, and 184–186; these read GRSNVGKS, GRTRA, DLPG, TKTD, and FSA. The Mg(2+) site is built by Ser39 and Thr61.

It belongs to the TRAFAC class TrmE-Era-EngA-EngB-Septin-like GTPase superfamily. EngB GTPase family. It depends on Mg(2+) as a cofactor.

Functionally, necessary for normal cell division and for the maintenance of normal septation. The chain is Probable GTP-binding protein EngB from Anaeromyxobacter dehalogenans (strain 2CP-1 / ATCC BAA-258).